Consider the following 239-residue polypeptide: Carboxy-S-adenosyl-L-methionine synthase (239 aa).

Residues Y35, 64–66 (GSS), 114–115 (DL), N129, and R196 each bind S-adenosyl-L-methionine.

Belongs to the class I-like SAM-binding methyltransferase superfamily. Cx-SAM synthase family. As to quaternary structure, homodimer.

The enzyme catalyses prephenate + S-adenosyl-L-methionine = carboxy-S-adenosyl-L-methionine + 3-phenylpyruvate + H2O. Catalyzes the conversion of S-adenosyl-L-methionine (SAM) to carboxy-S-adenosyl-L-methionine (Cx-SAM). The chain is Carboxy-S-adenosyl-L-methionine synthase from Helicobacter hepaticus (strain ATCC 51449 / 3B1).